A 318-amino-acid polypeptide reads, in one-letter code: Ferric enterobactin-binding periplasmic protein FepB (318 aa).

The signal sequence occupies residues 1-26; sequence MRLAPLYRNALLLTGLLLSGIAAVQA. Residues 48 to 318 form the Fe/B12 periplasmic-binding domain; sequence RIVSTSVTLT…QVLDRLKALF (271 aa).

Belongs to the bacterial solute-binding protein 8 family. The complex is composed of two ATP-binding proteins (FepC), two transmembrane proteins (FepD and FepG) and a solute-binding protein (FepB).

The protein localises to the periplasm. Its function is as follows. Part of the ABC transporter complex FepBDGC involved in ferric enterobactin uptake. Binds ferric enterobactin. The polypeptide is Ferric enterobactin-binding periplasmic protein FepB (fepB) (Escherichia coli O6:H1 (strain CFT073 / ATCC 700928 / UPEC)).